Here is a 65-residue protein sequence, read N- to C-terminus: Translational regulator CsrA (65 aa).

It belongs to the CsrA/RsmA family. As to quaternary structure, homodimer; the beta-strands of each monomer intercalate to form a hydrophobic core, while the alpha-helices form wings that extend away from the core.

The protein localises to the cytoplasm. A translational regulator that binds mRNA to regulate translation initiation and/or mRNA stability. Usually binds in the 5'-UTR at or near the Shine-Dalgarno sequence preventing ribosome-binding, thus repressing translation. Its main target seems to be the major flagellin gene, while its function is anatagonized by FliW. This is Translational regulator CsrA from Bordetella petrii (strain ATCC BAA-461 / DSM 12804 / CCUG 43448).